Reading from the N-terminus, the 361-residue chain is Replication factor C subunit 3 (361 aa).

A compositionally biased stretch (low complexity) spans 1–28 (MAGATAATPMDIDAAAPPPGAAAKGKAP). Residues 1–39 (MAGATAATPMDIDAAAPPPGAAAKGKAPLSSTPGGRAAP) form a disordered region. 77–84 (YGPPGTGK) provides a ligand contact to ATP.

This sequence belongs to the activator 1 small subunits family. As to quaternary structure, heterotetramer of subunits RFC2, RFC3, RFC4 and RFC5 that can form a complex with RFC1. Expressed in roots, leaves, shoot apical meristem (SAM), flag leaves and panicles.

The protein resides in the nucleus. Functionally, may be involved in DNA replication and thus regulate cell proliferation. This Oryza sativa subsp. japonica (Rice) protein is Replication factor C subunit 3 (RFC3).